Here is a 365-residue protein sequence, read N- to C-terminus: Protein SGT1 homolog (365 aa).

Residue Ala-2 is modified to N-acetylalanine. TPR repeat units follow at residues 11-44 (SQRF…KPDD), 45-78 (AQYY…NPNN), and 79-112 (STAM…DIET). Residues 169–258 (QSKIKYDWYQ…PEAVRWEKLE (90 aa)) form the CS domain. At Thr-265 the chain carries Phosphothreonine. Residues 276–365 (LYPSSSPYTR…PPDDMEWKKY (90 aa)) enclose the SGS domain. Ser-281 is modified (phosphoserine). The residue at position 284 (Thr-284) is a Phosphothreonine. Lys-295 is covalently cross-linked (Glycyl lysine isopeptide (Lys-Gly) (interchain with G-Cter in SUMO1); alternate). A Glycyl lysine isopeptide (Lys-Gly) (interchain with G-Cter in SUMO2); alternate cross-link involves residue Lys-295. Ser-331 carries the phosphoserine modification.

This sequence belongs to the SGT1 family. Probably associates with SCF (SKP1-CUL1-F-box protein) complex through interaction with SKP1. Interacts with S100A6. Interacts with HSP90. Phosphorylated at Ser-281 and Ser-331, dephosphorylation promotes nuclear translocation, most likely due to disruption of the SUGT1-HSP90 complex.

The protein resides in the cytoplasm. It localises to the nucleus. Its function is as follows. May play a role in ubiquitination and subsequent proteasomal degradation of target proteins. The protein is Protein SGT1 homolog of Homo sapiens (Human).